Here is a 149-residue protein sequence, read N- to C-terminus: Large ribosomal subunit protein bL9 (149 aa).

Belongs to the bacterial ribosomal protein bL9 family.

In terms of biological role, binds to the 23S rRNA. This Klebsiella pneumoniae subsp. pneumoniae (strain ATCC 700721 / MGH 78578) protein is Large ribosomal subunit protein bL9.